Consider the following 568-residue polypeptide: SLAIN motif-containing protein 1 (568 aa).

Disordered stretches follow at residues 1–22, 59–92, 139–162, 235–256, and 291–403; these read MMAE…SGPV, LLLL…TAAA, GGGP…SPPP, YTSR…STSE, and STSA…LRRS. Residues 21-56 adopt a coiled-coil conformation; that stretch reads PVVNAELEVKKLQELVRKLEKQNEQLRSRAASAAAA. Residues 62–74 are compositionally biased toward pro residues; sequence LPPPPPAAPPPAG. Residues 75–92 show a composition bias toward low complexity; sequence LQPLGPRSPPAATATAAA. Gly residues predominate over residues 139–149; sequence GGGPEPGGAGT. Polar residues predominate over residues 235–245; it reads YTSRGSPLSPQ. At Ser243 the chain carries Phosphoserine. 2 stretches are compositionally biased toward low complexity: residues 246–255 and 291–307; these read SSIDSELSTS and STSA…SLSS. A compositionally biased stretch (acidic residues) spans 316-329; that stretch reads QEYDQYSLEDEEEF. Low complexity predominate over residues 366-384; sequence SSQYFPSNNYQQQQYYSPQ. Over residues 385-395 the composition is skewed to polar residues; it reads AQTPDQQPNRT. An asymmetric dimethylarginine mark is found at Arg471 and Arg543.

Belongs to the SLAIN motif-containing family. Interacts with MAPRE1, MAPRE2, MAPRE3 and CKAP5. Interacts with ZDHHC17 (via ANK repeats). As to expression, expressed in embryonic stem cells. Expressed in brain.

It is found in the cytoplasm. It localises to the cytoskeleton. Microtubule plus-end tracking protein that might be involved in the regulation of cytoplasmic microtubule dynamics, microtubule organization and microtubule elongation. The protein is SLAIN motif-containing protein 1 (SLAIN1) of Homo sapiens (Human).